Reading from the N-terminus, the 424-residue chain is Enolase (424 aa).

Gln-165 contributes to the (2R)-2-phosphoglycerate binding site. The active-site Proton donor is Glu-207. 3 residues coordinate Mg(2+): Asp-244, Glu-283, and Asp-310. 4 residues coordinate (2R)-2-phosphoglycerate: Lys-335, Arg-364, Ser-365, and Lys-386. Lys-335 acts as the Proton acceptor in catalysis.

Belongs to the enolase family. Mg(2+) serves as cofactor.

Its subcellular location is the cytoplasm. The protein resides in the secreted. It localises to the cell surface. It carries out the reaction (2R)-2-phosphoglycerate = phosphoenolpyruvate + H2O. Its pathway is carbohydrate degradation; glycolysis; pyruvate from D-glyceraldehyde 3-phosphate: step 4/5. Functionally, catalyzes the reversible conversion of 2-phosphoglycerate (2-PG) into phosphoenolpyruvate (PEP). It is essential for the degradation of carbohydrates via glycolysis. The polypeptide is Enolase (Chlamydia muridarum (strain MoPn / Nigg)).